Consider the following 244-residue polypeptide: MNGFSDLNPSESKPSLSQLAPLEAILFDVDGTLCDSDPIHLIAFQELLQEIGFNNGVPIDEKFFVENIAGKHNSEIALLLFPDDVSRGLKFCDEKEALYRKIVAEKIKPLDGLIKLTKWIEDRGLKRAAVTNAPKENAELMISKLGLTDFFQAVILGSECEFPKPHPGPYLKALEVLNVSKEHTLVFEDSISGIKAGVAAGMPVIGLTTGNPASLLMQAKPAFLIENYADPKLWAVLEELDNKS.

The Nucleophile role is filled by D28. Residues D28, D30, and D189 each contribute to the Mg(2+) site. D30 serves as the catalytic Proton donor.

It belongs to the HAD-like hydrolase superfamily. DOG/GPP family. Mg(2+) is required as a cofactor. Ubiquitous with highest expression in flowers.

In terms of biological role, acts as a phosphosugar phosphatase on a broad range of sugar phosphate substrates with preferential activity on D-ribose-5-phosphate, 2-deoxy-D-ribose-5-phosphate, 2-deoxy-D-glucose-6-phosphate, and D-mannose-6-phosphate and with a lower activity on D-fructose-1-phosphate, D-glucose-6-phosphate, DL-glycerol-3-phosphate, and D-fructose-6-phosphate. In Arabidopsis thaliana (Mouse-ear cress), this protein is Haloacid dehalogenase-like hydrolase domain-containing protein Sgpp (SGPP).